The chain runs to 259 residues: Probable WRKY transcription factor 65 (259 aa).

Over residues 1–17 (MKRGLDMARSYNDHESS) the composition is skewed to basic and acidic residues. Disordered regions lie at residues 1-101 (MKRG…RCSS) and 126-165 (TSEH…EEED). Polar residues predominate over residues 18-31 (QETGPESPNSSTFN). Basic and acidic residues predominate over residues 47–69 (RSVEKRVVNVPMKEMEGSRHKGD). The WRKY DNA-binding region spans 68-134 (GDTTPPSDSW…YTSEHNHPWP (67 aa)). The span at 154–165 (EPEVEPEAEEED) shows a compositional bias: acidic residues.

It localises to the nucleus. Transcription factor. Interacts specifically with the W box (5'-(T)TGAC[CT]-3'), a frequently occurring elicitor-responsive cis-acting element. The sequence is that of Probable WRKY transcription factor 65 (WRKY65) from Arabidopsis thaliana (Mouse-ear cress).